The following is an 85-amino-acid chain: Large ribosomal subunit protein bL27 (85 aa).

Residues 1–21 form a disordered region; the sequence is MAHKKGVGSSKNGRESESKRL.

It belongs to the bacterial ribosomal protein bL27 family.

The polypeptide is Large ribosomal subunit protein bL27 (Porphyromonas gingivalis (strain ATCC 33277 / DSM 20709 / CIP 103683 / JCM 12257 / NCTC 11834 / 2561)).